A 171-amino-acid chain; its full sequence is Transcription factor pcr1 (171 aa).

The 64-residue stretch at 10 to 73 folds into the bZIP domain; the sequence is DEKRRRILER…FRLKSQLLAH (64 aa). A basic motif region spans residues 12–51; it reads KRRRILERNRIAASKFRQKKKEWIKELEQTANAAFEQSKR. Residues 52–66 form a leucine-zipper region; the sequence is LQLLLSQLQQEAFRL. Residues 125 to 171 form a disordered region; the sequence is QMHPSLQGLPPNQHPQMPPSSQQPNSDDVQQHMFSAAGLPRSLGGPI. Residues 143–152 show a composition bias toward low complexity; the sequence is PSSQQPNSDD.

The protein belongs to the bZIP family. Heterodimer of pcr1/mts2 and atf1/mts1.

Its subcellular location is the nucleus. Involved in regulation of gene expression for sexual development. Binds and activates CRE sites (cAMP-response elements, also known as M26 meiotic recombination hotspots). The protein is Transcription factor pcr1 (pcr1) of Schizosaccharomyces pombe (strain 972 / ATCC 24843) (Fission yeast).